A 282-amino-acid chain; its full sequence is 1,4-dihydroxy-6-naphtoate synthase (282 aa).

Substrate-binding positions include 57–59 (KVS) and 109–110 (TA). His-153 acts as the Proton acceptor in catalysis.

Belongs to the MqnA/MqnD family. MqnD subfamily.

It catalyses the reaction cyclic dehypoxanthinylfutalosinate = 1,4-dihydroxy-6-naphthoate + dihydroxyacetone. It functions in the pathway quinol/quinone metabolism; menaquinone biosynthesis. Its function is as follows. Catalyzes the conversion of cyclic dehypoxanthine futalosine (cyclic DHFL) into 1,4-dihydroxy-6-naphthoate, a step in the biosynthesis of menaquinone (MK, vitamin K2). The protein is 1,4-dihydroxy-6-naphtoate synthase of Streptomyces coelicolor (strain ATCC BAA-471 / A3(2) / M145).